A 153-amino-acid chain; its full sequence is uncharacterized protein (153 aa).

The segment at leucine 72–serine 98 is disordered.

The protein localises to the cytoplasm. It is found in the nucleus. This is an uncharacterized protein from Schizosaccharomyces pombe (strain 972 / ATCC 24843) (Fission yeast).